A 151-amino-acid polypeptide reads, in one-letter code: Arginine repressor (151 aa).

It belongs to the ArgR family.

Its subcellular location is the cytoplasm. It functions in the pathway amino-acid biosynthesis; L-arginine biosynthesis [regulation]. In terms of biological role, regulates arginine biosynthesis genes. The protein is Arginine repressor of Clostridium novyi (strain NT).